The primary structure comprises 242 residues: Thaumatin-like protein 2 (242 aa).

An N-terminal signal peptide occupies residues 1–23 (MMKTLGAVLSLSLTLLSFGGAHA). 8 disulfides stabilise this stretch: cysteine 32/cysteine 241, cysteine 77/cysteine 87, cysteine 92/cysteine 99, cysteine 147/cysteine 230, cysteine 152/cysteine 213, cysteine 160/cysteine 176, cysteine 180/cysteine 189, and cysteine 190/cysteine 200.

The protein belongs to the thaumatin family. As to expression, preferentially expressed in the abscission zone of fruit. Also expressed in leaf abscission zone.

The protein localises to the secreted. In terms of biological role, may be involved in protecting plant tissues from pathogen infection. This chain is Thaumatin-like protein 2, found in Prunus persica (Peach).